Consider the following 122-residue polypeptide: Large ribosomal subunit protein bL12 (122 aa).

The protein belongs to the bacterial ribosomal protein bL12 family. As to quaternary structure, homodimer. Part of the ribosomal stalk of the 50S ribosomal subunit. Forms a multimeric L10(L12)X complex, where L10 forms an elongated spine to which 2 to 4 L12 dimers bind in a sequential fashion. Binds GTP-bound translation factors.

Forms part of the ribosomal stalk which helps the ribosome interact with GTP-bound translation factors. Is thus essential for accurate translation. The sequence is that of Large ribosomal subunit protein bL12 from Cronobacter sakazakii (strain ATCC BAA-894) (Enterobacter sakazakii).